The chain runs to 193 residues: Glycerol-3-phosphate acyltransferase (193 aa).

5 consecutive transmembrane segments (helical) span residues 2–22, 51–71, 78–98, 112–132, and 154–174; these read AFII…AVIV, QAAF…VLIA, GVSL…PVYF, VLLG…VIVV, and IIAG…LIIW.

The protein belongs to the PlsY family. As to quaternary structure, probably interacts with PlsX.

The protein localises to the cell inner membrane. It catalyses the reaction an acyl phosphate + sn-glycerol 3-phosphate = a 1-acyl-sn-glycero-3-phosphate + phosphate. Its pathway is lipid metabolism; phospholipid metabolism. Functionally, catalyzes the transfer of an acyl group from acyl-phosphate (acyl-PO(4)) to glycerol-3-phosphate (G3P) to form lysophosphatidic acid (LPA). This enzyme utilizes acyl-phosphate as fatty acyl donor, but not acyl-CoA or acyl-ACP. The chain is Glycerol-3-phosphate acyltransferase from Coxiella burnetii (strain CbuK_Q154) (Coxiella burnetii (strain Q154)).